Reading from the N-terminus, the 781-residue chain is Cadherin-24 (781 aa).

Positions 1–22 are cleaved as a signal peptide; it reads MWGLVRLLLAWLGGWGCMGRLA. A propeptide spanning residues 23-44 is cleaved from the precursor; that stretch reads APVPAWAGSRGHSGPTLLRTRR. Topologically, residues 45–603 are extracellular; it reads SWVWNQFFVI…LSPTGLSTGA (559 aa). 5 Cadherin domains span residues 46 to 150, 151 to 259, 260 to 374, 375 to 479, and 479 to 592; these read WVWN…PPVF, PLGP…PPKF, PQSL…PPAF, TQAT…APQL, and LAEP…WPEA. Residues asparagine 446, asparagine 510, and asparagine 525 are each glycosylated (N-linked (GlcNAc...) asparagine). A helical membrane pass occupies residues 604-624; the sequence is LLAIVTCMGTLLALVVLFVAL. Over 625–781 the chain is Cytoplasmic; sequence RRQKQEALMV…LYGAKEPPAP (157 aa). Disordered stretches follow at residues 665–700 and 731–762; these read LQNP…PGPA and EGRG…LDDW. A compositionally biased stretch (low complexity) spans 733–746; it reads RGSSCGSLSSLGSG.

As to quaternary structure, associates with alpha-, beta- and delta-catenins.

The protein localises to the cell membrane. In terms of biological role, cadherins are calcium-dependent cell adhesion proteins. They preferentially interact with themselves in a homophilic manner in connecting cells; cadherins may thus contribute to the sorting of heterogeneous cell types. Cadherin-24 mediate strong cell-cell adhesion. This Mus musculus (Mouse) protein is Cadherin-24 (Cdh24).